The sequence spans 437 residues: Ribosomal protein uS12 methylthiotransferase RimO (437 aa).

In terms of domain architecture, MTTase N-terminal spans 5–116 (PTIAISHLGC…IVEIVERVET (112 aa)). Residues C14, C50, C79, C154, C158, and C161 each coordinate [4Fe-4S] cluster. Residues 140 to 369 (TTSEGVAYLR…MLTQQPISER (230 aa)) form the Radical SAM core domain. The 66-residue stretch at 372–437 (QAYIGQTVDV…DTYDLYGEIV (66 aa)) folds into the TRAM domain.

This sequence belongs to the methylthiotransferase family. RimO subfamily. [4Fe-4S] cluster is required as a cofactor.

It is found in the cytoplasm. It catalyses the reaction L-aspartate(89)-[ribosomal protein uS12]-hydrogen + (sulfur carrier)-SH + AH2 + 2 S-adenosyl-L-methionine = 3-methylsulfanyl-L-aspartate(89)-[ribosomal protein uS12]-hydrogen + (sulfur carrier)-H + 5'-deoxyadenosine + L-methionine + A + S-adenosyl-L-homocysteine + 2 H(+). Catalyzes the methylthiolation of an aspartic acid residue of ribosomal protein uS12. This is Ribosomal protein uS12 methylthiotransferase RimO from Microcystis aeruginosa (strain NIES-843 / IAM M-2473).